Consider the following 341-residue polypeptide: MSITPQEALQRCIEHRELFHDEMTDMMRLIMSGEMAPELVAGLLVALRTKKETVGEIAAAAQVMREFATSVHIDDRSHLVDVVGTGGDGAHTFNISTAAMFVAAAAGAKIAKHGNRSVSSKSGSADVLEALGANLALSAEQVAKCISTVGAGFMFAPNHHPAMKNVVPIRKQLGVRTIFNILGPLTNPADAKRILMGVFHADLVGIQARVLQALGMEHALVVYGRDGLDEISLEGPTLVGELKDGVVREYEIHPKDFGLHTAPTNSFKVANAEESKRIVLDVIDNKPSAASDIVCLNAGATLYVAGIAPDIASGIAKAKAAIASGAARQKLDAFVAASQSN.

5-phospho-alpha-D-ribose 1-diphosphate-binding positions include Gly-84, 87-88 (GD), Thr-92, 94-97 (NIST), 112-120 (KHGNRSVSS), and Ser-124. Gly-84 provides a ligand contact to anthranilate. A Mg(2+)-binding site is contributed by Ser-96. Asn-115 is a binding site for anthranilate. Residue Arg-170 coordinates anthranilate. Mg(2+)-binding residues include Asp-229 and Glu-230.

It belongs to the anthranilate phosphoribosyltransferase family. As to quaternary structure, homodimer. It depends on Mg(2+) as a cofactor.

The catalysed reaction is N-(5-phospho-beta-D-ribosyl)anthranilate + diphosphate = 5-phospho-alpha-D-ribose 1-diphosphate + anthranilate. It participates in amino-acid biosynthesis; L-tryptophan biosynthesis; L-tryptophan from chorismate: step 2/5. In terms of biological role, catalyzes the transfer of the phosphoribosyl group of 5-phosphorylribose-1-pyrophosphate (PRPP) to anthranilate to yield N-(5'-phosphoribosyl)-anthranilate (PRA). This Polynucleobacter asymbioticus (strain DSM 18221 / CIP 109841 / QLW-P1DMWA-1) (Polynucleobacter necessarius subsp. asymbioticus) protein is Anthranilate phosphoribosyltransferase.